The chain runs to 472 residues: Ribosomal protein uS12 methylthiotransferase RimO (472 aa).

Positions 33–143 constitute an MTTase N-terminal domain; it reads NRIGFVSLGC…VLKHVHKYVP (111 aa). [4Fe-4S] cluster-binding residues include cysteine 42, cysteine 78, cysteine 107, cysteine 175, cysteine 179, and cysteine 182. A Radical SAM core domain is found at 161 to 398; sequence LTPKHYAYLK…MEVQAEISAE (238 aa). A TRAM domain is found at 401–467; that stretch reads ARFVGRTLDI…EHDLWAEVVD (67 aa).

This sequence belongs to the methylthiotransferase family. RimO subfamily. Requires [4Fe-4S] cluster as cofactor.

It is found in the cytoplasm. The catalysed reaction is L-aspartate(89)-[ribosomal protein uS12]-hydrogen + (sulfur carrier)-SH + AH2 + 2 S-adenosyl-L-methionine = 3-methylsulfanyl-L-aspartate(89)-[ribosomal protein uS12]-hydrogen + (sulfur carrier)-H + 5'-deoxyadenosine + L-methionine + A + S-adenosyl-L-homocysteine + 2 H(+). In terms of biological role, catalyzes the methylthiolation of an aspartic acid residue of ribosomal protein uS12. This chain is Ribosomal protein uS12 methylthiotransferase RimO, found in Shewanella baltica (strain OS155 / ATCC BAA-1091).